A 156-amino-acid chain; its full sequence is Small ribosomal subunit protein uS7 (156 aa).

This sequence belongs to the universal ribosomal protein uS7 family. Part of the 30S ribosomal subunit. Contacts proteins S9 and S11.

Functionally, one of the primary rRNA binding proteins, it binds directly to 16S rRNA where it nucleates assembly of the head domain of the 30S subunit. Is located at the subunit interface close to the decoding center, probably blocks exit of the E-site tRNA. The protein is Small ribosomal subunit protein uS7 of Photorhabdus laumondii subsp. laumondii (strain DSM 15139 / CIP 105565 / TT01) (Photorhabdus luminescens subsp. laumondii).